We begin with the raw amino-acid sequence, 122 residues long: Large ribosomal subunit protein uL14 (122 aa).

The protein belongs to the universal ribosomal protein uL14 family. As to quaternary structure, part of the 50S ribosomal subunit. Forms a cluster with proteins L3 and L19. In the 70S ribosome, L14 and L19 interact and together make contacts with the 16S rRNA in bridges B5 and B8.

Binds to 23S rRNA. Forms part of two intersubunit bridges in the 70S ribosome. The sequence is that of Large ribosomal subunit protein uL14 from Cupriavidus taiwanensis (strain DSM 17343 / BCRC 17206 / CCUG 44338 / CIP 107171 / LMG 19424 / R1) (Ralstonia taiwanensis (strain LMG 19424)).